The primary structure comprises 490 residues: Glutathione hydrolase 6 (490 aa).

At 1 to 52 (MEPEAGPVLYQKLRVWEPSLESEEEEEEISEQLILDASGPHDSSGNKAGRLP) the chain is on the cytoplasmic side. A helical; Signal-anchor for type II membrane protein transmembrane segment spans residues 53-73 (GAWAQLVAALLLLAIGFSLAV). Residues 74 to 490 (RQLCSSGASP…PSGCCPFQGF (417 aa)) lie on the Extracellular side of the membrane. Residues N160, N165, and N374 are each glycosylated (N-linked (GlcNAc...) asparagine).

It belongs to the gamma-glutamyltransferase family. In terms of assembly, heterodimer composed of the light and heavy chains. The active site is located in the light chain. In terms of processing, cleaved by autocatalysis into a large and a small subunit and the autocatalytic cleavage is essential to the functional activation of the enzyme.

The protein resides in the membrane. It carries out the reaction an N-terminal (5-L-glutamyl)-[peptide] + an alpha-amino acid = 5-L-glutamyl amino acid + an N-terminal L-alpha-aminoacyl-[peptide]. It catalyses the reaction glutathione + H2O = L-cysteinylglycine + L-glutamate. The catalysed reaction is an S-substituted glutathione + H2O = an S-substituted L-cysteinylglycine + L-glutamate. It functions in the pathway sulfur metabolism; glutathione metabolism. Hydrolyzes and transfers gamma-glutamyl moieties from glutathione and other gamma-glutamyl compounds to acceptors. This is Glutathione hydrolase 6 from Bos taurus (Bovine).